We begin with the raw amino-acid sequence, 191 residues long: Peptidyl-tRNA hydrolase (191 aa).

Tyr15 provides a ligand contact to tRNA. His20 functions as the Proton acceptor in the catalytic mechanism. TRNA-binding residues include Phe66, Asn68, and Asn114.

The protein belongs to the PTH family. In terms of assembly, monomer.

Its subcellular location is the cytoplasm. It carries out the reaction an N-acyl-L-alpha-aminoacyl-tRNA + H2O = an N-acyl-L-amino acid + a tRNA + H(+). Its function is as follows. Hydrolyzes ribosome-free peptidyl-tRNAs (with 1 or more amino acids incorporated), which drop off the ribosome during protein synthesis, or as a result of ribosome stalling. In terms of biological role, catalyzes the release of premature peptidyl moieties from peptidyl-tRNA molecules trapped in stalled 50S ribosomal subunits, and thus maintains levels of free tRNAs and 50S ribosomes. The polypeptide is Peptidyl-tRNA hydrolase (Streptococcus agalactiae serotype Ia (strain ATCC 27591 / A909 / CDC SS700)).